A 127-amino-acid polypeptide reads, in one-letter code: Large ribosomal subunit protein bL17 (127 aa).

This sequence belongs to the bacterial ribosomal protein bL17 family. As to quaternary structure, part of the 50S ribosomal subunit. Contacts protein L32.

This Lactobacillus delbrueckii subsp. bulgaricus (strain ATCC 11842 / DSM 20081 / BCRC 10696 / JCM 1002 / NBRC 13953 / NCIMB 11778 / NCTC 12712 / WDCM 00102 / Lb 14) protein is Large ribosomal subunit protein bL17.